Reading from the N-terminus, the 518-residue chain is UDP-N-acetylmuramate--L-alanine ligase (518 aa).

158–164 (GTHGKTT) lines the ATP pocket.

Belongs to the MurCDEF family.

The protein localises to the cytoplasm. The enzyme catalyses UDP-N-acetyl-alpha-D-muramate + L-alanine + ATP = UDP-N-acetyl-alpha-D-muramoyl-L-alanine + ADP + phosphate + H(+). The protein operates within cell wall biogenesis; peptidoglycan biosynthesis. Its function is as follows. Cell wall formation. The sequence is that of UDP-N-acetylmuramate--L-alanine ligase from Crocosphaera subtropica (strain ATCC 51142 / BH68) (Cyanothece sp. (strain ATCC 51142)).